The sequence spans 114 residues: Flagellar hook-basal body complex protein FliE (114 aa).

Belongs to the FliE family.

It is found in the bacterial flagellum basal body. The protein is Flagellar hook-basal body complex protein FliE of Burkholderia cenocepacia (strain ATCC BAA-245 / DSM 16553 / LMG 16656 / NCTC 13227 / J2315 / CF5610) (Burkholderia cepacia (strain J2315)).